The chain runs to 534 residues: ATP synthase subunit alpha (534 aa).

Position 170 to 177 (170 to 177 (GDRQTGKT)) interacts with ATP. The tract at residues 505 to 534 (HEDARVKSETAQAAGKDKDEKAAATAGAGK) is disordered.

The protein belongs to the ATPase alpha/beta chains family. In terms of assembly, F-type ATPases have 2 components, CF(1) - the catalytic core - and CF(0) - the membrane proton channel. CF(1) has five subunits: alpha(3), beta(3), gamma(1), delta(1), epsilon(1). CF(0) has three main subunits: a(1), b(2) and c(9-12). The alpha and beta chains form an alternating ring which encloses part of the gamma chain. CF(1) is attached to CF(0) by a central stalk formed by the gamma and epsilon chains, while a peripheral stalk is formed by the delta and b chains.

It is found in the cell inner membrane. It carries out the reaction ATP + H2O + 4 H(+)(in) = ADP + phosphate + 5 H(+)(out). Functionally, produces ATP from ADP in the presence of a proton gradient across the membrane. The alpha chain is a regulatory subunit. In Acidobacterium capsulatum (strain ATCC 51196 / DSM 11244 / BCRC 80197 / JCM 7670 / NBRC 15755 / NCIMB 13165 / 161), this protein is ATP synthase subunit alpha.